Reading from the N-terminus, the 385-residue chain is Putative hydroxypyruvate reductase (385 aa).

It carries out the reaction (R)-glycerate + NAD(+) = 3-hydroxypyruvate + NADH + H(+). The catalysed reaction is (R)-glycerate + NADP(+) = 3-hydroxypyruvate + NADPH + H(+). Its pathway is carbohydrate acid metabolism; tartrate degradation; 3-hydroxypyruvate from D-glycerate: step 1/1. Degrades an unidentified toxic product from the first step of tartrate degradation. The sequence is that of Putative hydroxypyruvate reductase (ttuD) from Agrobacterium vitis (Rhizobium vitis).